The chain runs to 316 residues: MVKLSGVYKGMRKGYGETLIELGKKYENLVVLDADLSGSTQTAMFAKEFPERFFNAGVAEQNMIGMAAGLATTGKIVFASSFSMFASGRAWEIIRNLVAYPKLNVKIVATHAGITVGEDGASHQMCEDIAIMRAIPNMVVIAPTDYYHTKNVIRTIAEYKGPVYVRMPRRDTEIIYENEEEATFEIGKGKILVDGEDLTIIATGEEVPEALRAGEILKENGISAEIVEMATIKPIDEEIIKKSKDFVVTVEDHSIIGGLGGAVAEVIASNGLNKKLLRIGINDVFGRSGKADELLKYYGLDGESIAKRIMEEMKKE.

This sequence belongs to the transketolase family. Requires thiamine diphosphate as cofactor.

It catalyses the reaction D-sedoheptulose 7-phosphate + D-glyceraldehyde 3-phosphate = aldehydo-D-ribose 5-phosphate + D-xylulose 5-phosphate. The polypeptide is Putative transketolase C-terminal section (Methanocaldococcus jannaschii (strain ATCC 43067 / DSM 2661 / JAL-1 / JCM 10045 / NBRC 100440) (Methanococcus jannaschii)).